The sequence spans 156 residues: 6,7-dimethyl-8-ribityllumazine synthase (156 aa).

5-amino-6-(D-ribitylamino)uracil is bound by residues Phe23, 57–59 (SFE), and 81–83 (AVI). 86 to 87 (GT) contributes to the (2S)-2-hydroxy-3-oxobutyl phosphate binding site. The Proton donor role is filled by His89. Residue Phe114 participates in 5-amino-6-(D-ribitylamino)uracil binding. Residue Arg128 participates in (2S)-2-hydroxy-3-oxobutyl phosphate binding.

This sequence belongs to the DMRL synthase family. In terms of assembly, forms an icosahedral capsid composed of 60 subunits, arranged as a dodecamer of pentamers.

It carries out the reaction (2S)-2-hydroxy-3-oxobutyl phosphate + 5-amino-6-(D-ribitylamino)uracil = 6,7-dimethyl-8-(1-D-ribityl)lumazine + phosphate + 2 H2O + H(+). Its pathway is cofactor biosynthesis; riboflavin biosynthesis; riboflavin from 2-hydroxy-3-oxobutyl phosphate and 5-amino-6-(D-ribitylamino)uracil: step 1/2. Its function is as follows. Catalyzes the formation of 6,7-dimethyl-8-ribityllumazine by condensation of 5-amino-6-(D-ribitylamino)uracil with 3,4-dihydroxy-2-butanone 4-phosphate. This is the penultimate step in the biosynthesis of riboflavin. This chain is 6,7-dimethyl-8-ribityllumazine synthase, found in Alkalilimnicola ehrlichii (strain ATCC BAA-1101 / DSM 17681 / MLHE-1).